Here is a 382-residue protein sequence, read N- to C-terminus: Pyrimidine monooxygenase RutA (382 aa).

FMN contacts are provided by residues 68-69 (IK), N134, E143, 159-160 (RY), and S209.

Belongs to the NtaA/SnaA/DszA monooxygenase family. RutA subfamily.

The catalysed reaction is uracil + FMNH2 + NADH + O2 = (Z)-3-ureidoacrylate + FMN + NAD(+) + H2O + H(+). The enzyme catalyses thymine + FMNH2 + NADH + O2 = (Z)-2-methylureidoacrylate + FMN + NAD(+) + H2O + H(+). In terms of biological role, catalyzes the pyrimidine ring opening between N-3 and C-4 by an unusual flavin hydroperoxide-catalyzed mechanism, adding oxygen atoms in the process to yield ureidoacrylate peracid, that immediately reacts with FMN forming ureidoacrylate and FMN-N(5)-oxide. The FMN-N(5)-oxide reacts spontaneously with NADH to produce FMN. Requires the flavin reductase RutF to regenerate FMN in vivo. The polypeptide is Pyrimidine monooxygenase RutA (Escherichia coli O81 (strain ED1a)).